The primary structure comprises 388 residues: Succinate--CoA ligase [ADP-forming] subunit beta (388 aa).

One can recognise an ATP-grasp domain in the interval 9-244; that stretch reads KEILRQAGVP…LDEEDPAEVE (236 aa). ATP-binding positions include lysine 46, 53-55, glutamate 99, alanine 102, and glutamate 107; that span reads GRG. Residues asparagine 199 and aspartate 213 each coordinate Mg(2+). Substrate is bound by residues asparagine 264 and 321–323; that span reads GIM.

This sequence belongs to the succinate/malate CoA ligase beta subunit family. Heterotetramer of two alpha and two beta subunits. The cofactor is Mg(2+).

It catalyses the reaction succinate + ATP + CoA = succinyl-CoA + ADP + phosphate. It carries out the reaction GTP + succinate + CoA = succinyl-CoA + GDP + phosphate. The protein operates within carbohydrate metabolism; tricarboxylic acid cycle; succinate from succinyl-CoA (ligase route): step 1/1. In terms of biological role, succinyl-CoA synthetase functions in the citric acid cycle (TCA), coupling the hydrolysis of succinyl-CoA to the synthesis of either ATP or GTP and thus represents the only step of substrate-level phosphorylation in the TCA. The beta subunit provides nucleotide specificity of the enzyme and binds the substrate succinate, while the binding sites for coenzyme A and phosphate are found in the alpha subunit. This chain is Succinate--CoA ligase [ADP-forming] subunit beta, found in Albidiferax ferrireducens (strain ATCC BAA-621 / DSM 15236 / T118) (Rhodoferax ferrireducens).